Reading from the N-terminus, the 334-residue chain is Type II methyltransferase M.NlaIII (334 aa).

It belongs to the N(4)/N(6)-methyltransferase family.

It carries out the reaction a 2'-deoxyadenosine in DNA + S-adenosyl-L-methionine = an N(6)-methyl-2'-deoxyadenosine in DNA + S-adenosyl-L-homocysteine + H(+). In terms of biological role, a methylase, recognizes the double-stranded sequence 5'-CATG-3', methylates A-2 on both strands and protects the DNA from cleavage by the NlaIII endonuclease. This chain is Type II methyltransferase M.NlaIII (nlaIIIM), found in Neisseria lactamica.